Here is a 126-residue protein sequence, read N- to C-terminus: Small ribosomal subunit protein uS12 (126 aa).

The span at 1-16 shows a compositional bias: polar residues; it reads MPTVNQLVRQGRTMNK. Positions 1 to 24 are disordered; the sequence is MPTVNQLVRQGRTMNKTKTKSPAL. A 3-methylthioaspartic acid modification is found at D89.

The protein belongs to the universal ribosomal protein uS12 family. In terms of assembly, part of the 30S ribosomal subunit. Contacts proteins S8 and S17. May interact with IF1 in the 30S initiation complex.

Functionally, with S4 and S5 plays an important role in translational accuracy. Its function is as follows. Interacts with and stabilizes bases of the 16S rRNA that are involved in tRNA selection in the A site and with the mRNA backbone. Located at the interface of the 30S and 50S subunits, it traverses the body of the 30S subunit contacting proteins on the other side and probably holding the rRNA structure together. The combined cluster of proteins S8, S12 and S17 appears to hold together the shoulder and platform of the 30S subunit. This is Small ribosomal subunit protein uS12 from Elusimicrobium minutum (strain Pei191).